A 1216-amino-acid chain; its full sequence is DNA polymerase subunit gamma-1 (1216 aa).

A compositionally biased stretch (low complexity) spans 27 to 37 (SSSVLDPVPSD). Residues 27–50 (SSSVLDPVPSDGQPQSQMPSSENG) form a disordered region. Residues 38–50 (GQPQSQMPSSENG) show a composition bias toward polar residues. Residues 179-183 (VFDVE) carry the Exo I motif. The Exonuclease activity role is filled by Asp-181. Residues 250–258 (VGHNVSFDR) carry the Exo II motif. Ser-289 contacts DNA. Residues 301-314 (GKHKTQHPTKRGQK) show a composition bias toward basic residues. Positions 301 to 321 (GKHKTQHPTKRGQKSQKNANG) are disordered. The Exo III motif lies at 377 to 385 (YCARDVWAT). Residues 488–518 (TASASKLPIEGAGPFGDPMDQEDPGPPSEEE) are disordered. The accessory-interacting determinant stretch occupies residues 491-552 (ASKLPIEGAG…RPQHLPGHPG (62 aa)). Acidic residues predominate over residues 506–518 (MDQEDPGPPSEEE). Position 560 (Arg-560) interacts with RNA. Ser-574 contacts DNA. RNA contacts are provided by His-731, Gly-740, and Lys-745. DNA is bound by residues Lys-783 and Thr-826. The segment at 835 to 841 (TWLTASN) is trigger loop. RNA contacts are provided by Ser-840 and Arg-846. The Pol A motif lies at 864–873 (VGADVDSQEL). Residues Asp-867, Val-868, Ser-870, Glu-872, Arg-920, Lys-924, and Tyr-928 each coordinate a 2'-deoxyribonucleoside 5'-triphosphate. The Mg(2+) site is built by Asp-867 and Val-868. Positions 920–935 (REHAKVFNYGRIYGAG) match the Pol B motif. The DNA site is built by Thr-1071 and Ser-1072. The short motif at 1111–1118 (HDEVRYLV) is the Pol C element. Asp-1112 is a binding site for a 2'-deoxyribonucleoside 5'-triphosphate. Asp-1112 is a binding site for Mg(2+).

The protein belongs to the DNA polymerase type-A family. As to quaternary structure, heterotrimer composed of a catalytic subunit and a homodimer of accessory subunits (POLG:POLG2). Interacts with TTC3. Interacts with LIG3. Mg(2+) is required as a cofactor.

The protein resides in the mitochondrion. It localises to the mitochondrion matrix. It is found in the mitochondrion nucleoid. The catalysed reaction is DNA(n) + a 2'-deoxyribonucleoside 5'-triphosphate = DNA(n+1) + diphosphate. It catalyses the reaction a 3'-end 2'-deoxyribonucleotidyl-deoxyribonucleotide-DNA + H2O = a 3'-end 2'-deoxyribonucleotide-DNA + a 2'-deoxyribonucleoside 5'-phosphate + H(+). The enzyme catalyses a 5'-end 2'-deoxyribose-2'-deoxyribonucleotide-DNA = (2E,4S)-4-hydroxypenten-2-al-5-phosphate + a 5'-end 5'-phospho-2'-deoxyribonucleoside-DNA + H(+). With respect to regulation, inhibited by dideoxynucleotides such as antiviral agent zalcitabine. Catalytic subunit of DNA polymerase gamma solely responsible for replication of mitochondrial DNA (mtDNA). Replicates both heavy and light strands of the circular mtDNA genome using a single-stranded DNA template, RNA primers and the four deoxyribonucleoside triphosphates as substrates. Has 5' -&gt; 3' polymerase activity. Functionally interacts with TWNK and SSBP1 at the replication fork to form a highly processive replisome, where TWNK unwinds the double-stranded DNA template prior to replication and SSBP1 covers the parental heavy strand to enable continuous replication of the entire mitochondrial genome. A single nucleotide incorporation cycle includes binding of the incoming nucleotide at the insertion site, a phosphodiester bond formation reaction that extends the 3'-end of the primer DNA, and translocation of the primer terminus to the post-insertion site. After completing replication of a mtDNA strand, mediates 3' -&gt; 5' exonucleolytic degradation at the nick to enable proper ligation. Highly accurate due to high nucleotide selectivity and 3' -&gt; 5' exonucleolytic proofreading. Proficiently corrects base substitutions, single-base additions and deletions in non-repetitive sequences and short repeats, but displays lower proofreading activity when replicating longer homopolymeric stretches. Exerts exonuclease activity toward single-stranded DNA and double-stranded DNA containing 3'-terminal mispairs. When a misincorporation occurs, transitions from replication to a pro-nucleolytic editing mode and removes the missincorporated nucleoside in the exonuclease active site. Proceeds via an SN2 nucleolytic mechanism in which Asp-198 catalyzes phosphodiester bond hydrolysis and Glu-200 stabilizes the leaving group. As a result the primer strand becomes one nucleotide shorter and is positioned in the post-insertion site, ready to resume DNA synthesis. Exerts 5'-deoxyribose phosphate (dRP) lyase activity and mediates repair-associated mtDNA synthesis (gap filling) in base-excision repair pathway. Catalyzes the release of the 5'-terminal 2-deoxyribose-5-phosphate sugar moiety from incised apurinic/apyrimidinic (AP) sites to produce a substrate for DNA ligase. The dRP lyase reaction does not require divalent metal ions and likely proceeds via a Schiff base intermediate in a beta-elimination reaction mechanism. The polypeptide is DNA polymerase subunit gamma-1 (Rattus norvegicus (Rat)).